The primary structure comprises 570 residues: Proline--tRNA ligase (570 aa).

Belongs to the class-II aminoacyl-tRNA synthetase family. ProS type 1 subfamily. As to quaternary structure, homodimer.

It is found in the cytoplasm. It catalyses the reaction tRNA(Pro) + L-proline + ATP = L-prolyl-tRNA(Pro) + AMP + diphosphate. Its function is as follows. Catalyzes the attachment of proline to tRNA(Pro) in a two-step reaction: proline is first activated by ATP to form Pro-AMP and then transferred to the acceptor end of tRNA(Pro). As ProRS can inadvertently accommodate and process non-cognate amino acids such as alanine and cysteine, to avoid such errors it has two additional distinct editing activities against alanine. One activity is designated as 'pretransfer' editing and involves the tRNA(Pro)-independent hydrolysis of activated Ala-AMP. The other activity is designated 'posttransfer' editing and involves deacylation of mischarged Ala-tRNA(Pro). The misacylated Cys-tRNA(Pro) is not edited by ProRS. The chain is Proline--tRNA ligase from Shewanella oneidensis (strain ATCC 700550 / JCM 31522 / CIP 106686 / LMG 19005 / NCIMB 14063 / MR-1).